The sequence spans 120 residues: Large ribosomal subunit protein uL18 (120 aa).

This sequence belongs to the universal ribosomal protein uL18 family. In terms of assembly, part of the 50S ribosomal subunit; part of the 5S rRNA/L5/L18/L25 subcomplex. Contacts the 5S and 23S rRNAs.

Functionally, this is one of the proteins that bind and probably mediate the attachment of the 5S RNA into the large ribosomal subunit, where it forms part of the central protuberance. The chain is Large ribosomal subunit protein uL18 from Geobacillus sp. (strain WCH70).